Consider the following 1288-residue polypeptide: Symplekin (1288 aa).

The tract at residues 1 to 124 (MASSSGDSVT…NMLLRDENVN (124 aa)) is interaction with HSF1. At Ser-13 the chain carries Phosphoserine. 5 HEAT repeats span residues 31-64 (TTSE…LIIN), 67-101 (PTLL…EACK), 104-146 (IELL…WMVK), 153-192 (LQEA…GLIV), and 227-266 (VLWE…IARQ). The segment at 335–392 (IARNMPSSKDSRKRPRDDTDSTLKKMKLEPNLGEDDEDKDLEPGPSGTSKASAQISGQ) is disordered. The Nuclear localization signal signature appears at 345 to 360 (SRKRPRDDTDSTLKKM). Over residues 349–362 (PRDDTDSTLKKMKL) the composition is skewed to basic and acidic residues. Residue Lys-361 forms a Glycyl lysine isopeptide (Lys-Gly) (interchain with G-Cter in SUMO1); alternate linkage. A Glycyl lysine isopeptide (Lys-Gly) (interchain with G-Cter in SUMO2); alternate cross-link involves residue Lys-361. The span at 380–392 (SGTSKASAQISGQ) shows a compositional bias: polar residues. A Glycyl lysine isopeptide (Lys-Gly) (interchain with G-Cter in SUMO2) cross-link involves residue Lys-483. Ser-494 is subject to Phosphoserine. Disordered regions lie at residues 1130–1151 (PAPA…PPQD) and 1163–1288 (LKRQ…KGNS). The segment covering 1131 to 1149 (APAPAPAPAPAPAPAPRPP) has biased composition (pro residues). Residues 1163–1173 (LKRQLEEEQKQ) are compositionally biased toward basic and acidic residues. Ser-1238 and Ser-1239 each carry phosphoserine. Lys-1256 participates in a covalent cross-link: Glycyl lysine isopeptide (Lys-Gly) (interchain with G-Cter in SUMO1). Phosphoserine is present on Ser-1260. Over residues 1267 to 1288 (AVEEALKTSSPETREPESKGNS) the composition is skewed to basic and acidic residues. Residue Thr-1274 is modified to Phosphothreonine. Ser-1276 bears the Phosphoserine mark.

The protein belongs to the Symplekin family. Found in a heat-sensitive complex at least composed of several cleavage and polyadenylation specific and cleavage stimulation factors. Interacts with CPSF2, CPSF3 and CSTF2. Interacts (via N-terminus) with HSF1; this interaction is direct and occurs upon heat shock. Interacts with SSU72.

It localises to the cytoplasm. The protein resides in the cytoskeleton. The protein localises to the cell junction. It is found in the tight junction. Its subcellular location is the cell membrane. It localises to the nucleus. The protein resides in the nucleoplasm. Scaffold protein that functions as a component of a multimolecular complex involved in histone mRNA 3'-end processing. Specific component of the tight junction (TJ) plaque, but might not be an exclusively junctional component. May have a house-keeping rule. Is involved in pre-mRNA polyadenylation. Enhances SSU72 phosphatase activity. The sequence is that of Symplekin (Sympk) from Mus musculus (Mouse).